A 428-amino-acid chain; its full sequence is Adenylosuccinate synthetase (428 aa).

Residues 12-18 and 40-42 contribute to the GTP site; these read GDEGKGK and GHT. Catalysis depends on D13, which acts as the Proton acceptor. Positions 13 and 40 each coordinate Mg(2+). IMP contacts are provided by residues 13 to 16, 38 to 41, T128, R142, Q223, T238, and R302; these read DEGK and NAGH. Catalysis depends on H41, which acts as the Proton donor. Position 298 to 304 (298 to 304) interacts with substrate; sequence VTTGRPR. GTP is bound by residues R304, 330–332, and 412–414; these read KLD and GVG.

Belongs to the adenylosuccinate synthetase family. Homodimer. Requires Mg(2+) as cofactor.

Its subcellular location is the cytoplasm. It catalyses the reaction IMP + L-aspartate + GTP = N(6)-(1,2-dicarboxyethyl)-AMP + GDP + phosphate + 2 H(+). It functions in the pathway purine metabolism; AMP biosynthesis via de novo pathway; AMP from IMP: step 1/2. Functionally, plays an important role in the de novo pathway of purine nucleotide biosynthesis. Catalyzes the first committed step in the biosynthesis of AMP from IMP. The polypeptide is Adenylosuccinate synthetase (Halothermothrix orenii (strain H 168 / OCM 544 / DSM 9562)).